Here is a 476-residue protein sequence, read N- to C-terminus: ATP synthase subunit beta, mitochondrial (476 aa).

156 to 163 is an ATP binding site; that stretch reads GAGVGKTV.

As to quaternary structure, F-type ATP synthases have 2 components, the catalytic core F(1) and the membrane-embedded component F(0), linked together by a central stalk and a peripheral stalk. The central stalk, also called rotor shaft, is often seen as part of F(1). The peripheral stalk is seen as part of F(0). F(0) contains the membrane channel next to the rotor. F-type ATP synthases form dimers but each monomer functions independently in ATP generation. The dimer consists of 18 different polypeptides: ATP1 (subunit alpha, part of F(1), 3 molecules per monomer), ATP2 (subunit beta, part of F(1), 3 molecules per monomer), ATP3 (subunit gamma, part of the central stalk), ATP4 (subunit b, part of the peripheral stalk), ATP5/OSCP (subunit 5/OSCP, part of the peripheral stalk), ATP6 (subunit a, part of the peripheral stalk), ATP7 (subunit d, part of the peripheral stalk), ATP8 (subunit 8, part of the peripheral stalk), OLI1 (subunit c, part of the rotor, 10 molecules per monomer), ATP14 (subunit h, part of the peripheral stalk), ATP15 (subunit epsilon, part of the central stalk), ATP16 (subunit delta, part of the central stalk), ATP17 (subunit f, part of the peripheral stalk), ATP18 (subunit i/j, part of the peripheral stalk). Dimer-specific subunits are ATP19 (subunit k, at interface between monomers), ATP20 (subunit g, at interface between monomers), TIM11 (subunit e, at interface between monomers). Also contains subunit L.

It localises to the mitochondrion inner membrane. It carries out the reaction ATP + H2O + 4 H(+)(in) = ADP + phosphate + 5 H(+)(out). In terms of biological role, mitochondrial membrane ATP synthase (F(1)F(0) ATP synthase or Complex V) produces ATP from ADP in the presence of a proton gradient across the membrane which is generated by electron transport complexes of the respiratory chain. F-type ATP synthases consist of two structural domains, F(1) - containing the extramembraneous catalytic core, and F(0) - containing the membrane proton channel, linked together by a central stalk and a peripheral stalk. During catalysis, ATP synthesis in the catalytic domain of F(1) is coupled via a rotary mechanism of the central stalk subunits to proton translocation. Subunits alpha/ATP1 and beta/ATP2 form the catalytic core in F(1). Rotation of the central stalk against the surrounding alpha/ATP1(3)beta/ATP2(3) subunits leads to hydrolysis of ATP in three separate catalytic sites on the beta/ATP2 subunits. The protein is ATP synthase subunit beta, mitochondrial of Pichia angusta (Yeast).